The following is a 469-amino-acid chain: Aspartyl/glutamyl-tRNA(Asn/Gln) amidotransferase subunit B (469 aa).

This sequence belongs to the GatB/GatE family. GatB subfamily. Heterotrimer of A, B and C subunits.

It catalyses the reaction L-glutamyl-tRNA(Gln) + L-glutamine + ATP + H2O = L-glutaminyl-tRNA(Gln) + L-glutamate + ADP + phosphate + H(+). The enzyme catalyses L-aspartyl-tRNA(Asn) + L-glutamine + ATP + H2O = L-asparaginyl-tRNA(Asn) + L-glutamate + ADP + phosphate + 2 H(+). In terms of biological role, allows the formation of correctly charged Asn-tRNA(Asn) or Gln-tRNA(Gln) through the transamidation of misacylated Asp-tRNA(Asn) or Glu-tRNA(Gln) in organisms which lack either or both of asparaginyl-tRNA or glutaminyl-tRNA synthetases. The reaction takes place in the presence of glutamine and ATP through an activated phospho-Asp-tRNA(Asn) or phospho-Glu-tRNA(Gln). The sequence is that of Aspartyl/glutamyl-tRNA(Asn/Gln) amidotransferase subunit B from Methanococcus vannielii (strain ATCC 35089 / DSM 1224 / JCM 13029 / OCM 148 / SB).